The following is an 841-amino-acid chain: Microcephalin (841 aa).

In terms of domain architecture, BRCT 1 spans 1–93 (MAAPILKDVV…AHIDESLFPA (93 aa)). Serine 278, serine 286, serine 295, and serine 332 each carry phosphoserine. Threonine 334 carries the post-translational modification Phosphothreonine. 4 disordered regions span residues 340-375 (GHLLIHSRPRSSSVKRKRVSYGFHSPPKEKCKRKRS), 417-445 (PDNLKERNSENLPPESQLPSSPAQFSCRS), 481-507 (SSPQKTANGEGRATLSGVTSEESSAPE), and 562-593 (VGLKSTQDKGTTSKISNSSEGEASSEHEPRSV). Residues 342 to 358 (LLIHSRPRSSSVKRKRV) are compositionally biased toward basic residues. The segment covering 433–445 (QLPSSPAQFSCRS) has biased composition (polar residues). The span at 565–583 (KSTQDKGTTSKISNSSEGE) shows a compositional bias: polar residues. BRCT domains follow at residues 646 to 736 (SGKG…SFEL) and 757 to 839 (YRGT…NYLL).

As to quaternary structure, interacts with CDC27 and maybe other components of the APC/C complex. Interacts with histone variant H2AX under DNA damage conditions.

The protein localises to the cytoplasm. It localises to the cytoskeleton. The protein resides in the microtubule organizing center. Its subcellular location is the centrosome. In terms of biological role, implicated in chromosome condensation and DNA damage induced cellular responses. May play a role in neurogenesis and regulation of the size of the cerebral cortex. The chain is Microcephalin from Colobus guereza (Mantled guereza).